The primary structure comprises 297 residues: 4-hydroxy-tetrahydrodipicolinate synthase (297 aa).

Threonine 47 is a binding site for pyruvate. The active-site Proton donor/acceptor is tyrosine 135. The active-site Schiff-base intermediate with substrate is lysine 163. Pyruvate is bound at residue isoleucine 205.

It belongs to the DapA family. Homotetramer; dimer of dimers.

It localises to the cytoplasm. It catalyses the reaction L-aspartate 4-semialdehyde + pyruvate = (2S,4S)-4-hydroxy-2,3,4,5-tetrahydrodipicolinate + H2O + H(+). The protein operates within amino-acid biosynthesis; L-lysine biosynthesis via DAP pathway; (S)-tetrahydrodipicolinate from L-aspartate: step 3/4. Functionally, catalyzes the condensation of (S)-aspartate-beta-semialdehyde [(S)-ASA] and pyruvate to 4-hydroxy-tetrahydrodipicolinate (HTPA). The sequence is that of 4-hydroxy-tetrahydrodipicolinate synthase from Dehalococcoides mccartyi (strain ATCC BAA-2100 / JCM 16839 / KCTC 5957 / BAV1).